Reading from the N-terminus, the 94-residue chain is Co-chaperonin GroES (94 aa).

Belongs to the GroES chaperonin family. As to quaternary structure, heptamer of 7 subunits arranged in a ring. Interacts with the chaperonin GroEL.

The protein localises to the cytoplasm. In terms of biological role, together with the chaperonin GroEL, plays an essential role in assisting protein folding. The GroEL-GroES system forms a nano-cage that allows encapsulation of the non-native substrate proteins and provides a physical environment optimized to promote and accelerate protein folding. GroES binds to the apical surface of the GroEL ring, thereby capping the opening of the GroEL channel. This Clostridium kluyveri (strain NBRC 12016) protein is Co-chaperonin GroES.